We begin with the raw amino-acid sequence, 609 residues long: 2',5'-phosphodiesterase 12 (609 aa).

The N-terminal 42 residues, 1–42 (MWRLPGARAALRVIRTAVEKLSRAEAGSQTAAGAMERAVVRC), are a transit peptide targeting the mitochondrion. Positions 89 to 99 (AAAAKKSRKSR) are enriched in basic residues. Disordered stretches follow at residues 89–111 (AAAA…CSGP) and 206–230 (AEPE…ETDV). 2 stretches are compositionally biased toward low complexity: residues 100 to 111 (PNASGGAACSGP) and 213 to 224 (PSSLSPSSPSSS). Position 217 is a phosphoserine (serine 217). 3 residues coordinate Mg(2+): glutamate 351, aspartate 496, and asparagine 498. Aspartate 496 (proton donor/acceptor) is an active-site residue.

The protein belongs to the CCR4/nocturin family. The cofactor is Mg(2+). As to expression, ubiquitous.

The protein resides in the mitochondrion matrix. The catalysed reaction is Exonucleolytic cleavage of poly(A) to 5'-AMP.. Its function is as follows. Enzyme that cleaves 2',5'-phosphodiester bond linking adenosines of the 5'-triphosphorylated oligoadenylates, triphosphorylated oligoadenylates referred as 2-5A modulates the 2-5A system. Degrades triphosphorylated 2-5A to produce AMP and ATP. Also cleaves 3',5'-phosphodiester bond of oligoadenylates. Plays a role as a negative regulator of the 2-5A system that is one of the major pathways for antiviral and antitumor functions induced by interferons (IFNs). Suppression of this enzyme increases cellular 2-5A levels and decreases viral replication in cultured small-airway epithelial cells and Hela cells. This Homo sapiens (Human) protein is 2',5'-phosphodiesterase 12 (PDE12).